The following is a 296-amino-acid chain: Complex I intermediate-associated protein 30, mitochondrial (296 aa).

A mitochondrion-targeting transit peptide spans 1–29 (MNSLLRQGLRLGCCLPAVQQQIHTTAVHR).

It belongs to the CIA30 family. Associates with mitochondrial complex I assembly intermediates during its biogenesis.

It is found in the mitochondrion. Chaperone protein involved in the assembly of the mitochondrial NADH:ubiquinone oxidoreductase complex (complex I). In Drosophila melanogaster (Fruit fly), this protein is Complex I intermediate-associated protein 30, mitochondrial.